The primary structure comprises 335 residues: Dolichyl-diphosphooligosaccharide--protein glycosyltransferase subunit MAGT1 (335 aa).

The N-terminal stretch at 1 to 29 is a signal peptide; sequence MAAGWWFWCVSVTVAVALLIVCDVPSVSA. The Extracellular segment spans residues 30-184; sequence QRKKEMVLSE…DVNIRVIRPP (155 aa). The region spanning 47–175 is the Thioredoxin domain; it reads WTNKRPVIRM…IARWIADRTD (129 aa). Asn-71 carries an N-linked (GlcNAc...) asparagine glycan. A disulfide bridge links Cys-87 with Cys-90. The helical transmembrane segment at 185–205 threads the bilayer; the sequence is NYAGPLMLGLLLAVIGGLVYL. The Cytoplasmic portion of the chain corresponds to 206–209; sequence RRSN. A helical transmembrane segment spans residues 210 to 230; that stretch reads MEFLFNKTGWAFAALCFVLAM. At 231 to 270 the chain is on the extracellular side; it reads TSGQMWNHIRGPPYAHKNPHTGHVNYIHGSSQAQFVAETH. A helical membrane pass occupies residues 271-291; that stretch reads IVLLFNGGVTLGMVLLCEAAT. Over 292–300 the chain is Cytoplasmic; sequence SDMDIGKRK. A helical transmembrane segment spans residues 301–321; sequence IMCVAGIGLVVLFFSWMLSIF. Residues 322-335 lie on the Extracellular side of the membrane; that stretch reads RSKYHGYPYSFLMS.

It belongs to the OST3/OST6 family. Accessory component of the STT3B-containing form of the oligosaccharyltransferase (OST) complex. OST exists in two different complex forms which contain common core subunits RPN1, RPN2, OST48, OST4, DAD1 and TMEM258, either STT3A or STT3B as catalytic subunits, and form-specific accessory subunits. OST can form stable complexes with the Sec61 complex or with both the Sec61 and TRAP complexes. The association of TUSC3 or MAGT1 with the STT3B-containing complex seems to be mutually exclusvice.

Its subcellular location is the cell membrane. It is found in the endoplasmic reticulum. It localises to the endoplasmic reticulum membrane. The protein operates within protein modification; protein glycosylation. Accessory component of the STT3B-containing form of the N-oligosaccharyl transferase (OST) complex which catalyzes the transfer of a high mannose oligosaccharide from a lipid-linked oligosaccharide donor to an asparagine residue within an Asn-X-Ser/Thr consensus motif in nascent polypeptide chains. Involved in N-glycosylation of STT3B-dependent substrates. Specifically required for the glycosylation of a subset of acceptor sites that are near cysteine residues; in this function seems to act redundantly with TUSC3. In its oxidized form proposed to form transient mixed disulfides with a glycoprotein substrate to facilitate access of STT3B to the unmodified acceptor site. Also has oxidoreductase-independent functions in the STT3B-containing OST complex possibly involving substrate recognition. Could indirectly play a role in Mg(2+) transport in epithelial cells. The sequence is that of Dolichyl-diphosphooligosaccharide--protein glycosyltransferase subunit MAGT1 from Pongo abelii (Sumatran orangutan).